The chain runs to 726 residues: Capsid scaffolding protein (726 aa).

Catalysis depends on charge relay system residues His-53, Ser-140, and His-159. A disordered region spans residues 321 to 362 (QIGPGAMSSVSQPAAAPYSGAMADSAAQVPSAQPPRIPCPPT). Residues 352-361 (AQPPRIPCPP) are compositionally biased toward pro residues. Residues 365–384 (TEMIYVPLGTYNDLVVSAAQ) are interaction with pAP. 4 disordered regions span residues 385-427 (ARRG…GRGS), 472-492 (RRGG…APGA), 568-644 (RASE…VAPS), and 668-726 (GIGA…MSTE). Over residues 402–418 (HAQQIVQRETGINSSSP) the composition is skewed to polar residues. The span at 702-720 (KLKDSRRAAEKRRAADEFA) shows a compositional bias: basic and acidic residues. The segment at 706–726 (SRRAAEKRRAADEFARIMSTE) is interaction with major capsid protein.

Belongs to the herpesviridae capsid scaffolding protein family. As to quaternary structure, homomultimer. Interacts with major capsid protein. In terms of assembly, exists in a monomer-dimer equilibrium with the dimer being the active species. In terms of processing, capsid scaffolding protein is cleaved by assemblin after formation of the spherical procapsid. As a result, the capsid obtains its mature, icosahedral shape. Cleavages occur at two or more sites: release (R-site) and maturation (M-site).

The protein resides in the host cytoplasm. It is found in the host nucleus. It catalyses the reaction Cleaves -Ala-|-Ser- and -Ala-|-Ala- bonds in the scaffold protein.. Functionally, acts as a scaffold protein by binding major capsid protein in the cytoplasm, inducing the nuclear localization of both proteins. Multimerizes in the nucleus such as major capsid protein forms the icosahedral T=16 capsid. Autocatalytic cleavage releases the assembly protein, and subsequently abolishes interaction with major capsid protein. Cleavages products are evicted from the capsid before or during DNA packaging. In terms of biological role, protease that plays an essential role in virion assembly within the nucleus. Catalyzes the cleavage of the assembly protein after formation of the spherical procapsid. By that cleavage, the capsid matures and gains its icosahedral shape. The cleavage sites seem to include -Ala-Ser-, -Ala-Ala-, as well as Ala-Thr bonds. Assemblin and cleavages products are evicted from the capsid before or during DNA packaging. Plays a major role in capsid assembly. Acts as a scaffold protein by binding major capsid protein. Multimerizes in the nucleus such as major capsid protein forms the icosahedral T=16 capsid. Cleaved by assemblin after capsid completion. The cleavages products are evicted from the capsid before or during DNA packaging. This Psittacid herpesvirus 1 (isolate Amazon parrot/-/97-0001/1997) (PsHV-1) protein is Capsid scaffolding protein (UL26).